The chain runs to 215 residues: Adenylate kinase (215 aa).

10-15 (GAGKGT) serves as a coordination point for ATP. Positions 30-59 (STGDMLRAAIKAQTPMGKMAKEFMDAGKLV) are NMP. Residues threonine 31, arginine 36, 57 to 59 (KLV), 85 to 88 (GFPR), and glutamine 92 each bind AMP. Residues 122 to 159 (GRRVHPASGRTYHITYNPPKVDDKDNETGDDLIQREDD) form an LID region. Residues arginine 123 and 132–133 (TY) contribute to the ATP site. Positions 156 and 167 each coordinate AMP. Residue glutamine 201 coordinates ATP.

This sequence belongs to the adenylate kinase family. In terms of assembly, monomer.

It localises to the cytoplasm. The enzyme catalyses AMP + ATP = 2 ADP. Its pathway is purine metabolism; AMP biosynthesis via salvage pathway; AMP from ADP: step 1/1. Functionally, catalyzes the reversible transfer of the terminal phosphate group between ATP and AMP. Plays an important role in cellular energy homeostasis and in adenine nucleotide metabolism. This is Adenylate kinase from Hydrogenovibrio crunogenus (strain DSM 25203 / XCL-2) (Thiomicrospira crunogena).